Here is a 205-residue protein sequence, read N- to C-terminus: High frequency lysogenization protein HflD homolog (205 aa).

It belongs to the HflD family.

The protein localises to the cytoplasm. Its subcellular location is the cell inner membrane. The protein is High frequency lysogenization protein HflD homolog of Shewanella pealeana (strain ATCC 700345 / ANG-SQ1).